The chain runs to 300 residues: U6 snRNA methylphosphate capping enzyme Amus (300 aa).

Residues 1 to 12 (MDLENNNNTPLT) are compositionally biased toward polar residues. Disordered regions lie at residues 1 to 21 (MDLE…KCAK) and 34 to 68 (VESK…GKPM). Residues 34–44 (VESKRLKKEES) show a composition bias toward basic and acidic residues. In terms of domain architecture, Bin3-type SAM spans 95–300 (DIRLDVLGTQ…KRPIQIFTKS (206 aa)). S-adenosyl-L-methionine contacts are provided by Asn-119 and Asp-140.

This sequence belongs to the methyltransferase superfamily.

It is found in the nucleus. In terms of biological role, probable S-adenosyl-L-methionine-dependent methyltransferase that binds and stabilizes U6 snRNA, probably by adding a methylphosphate cap at its 5'-end. Required for U6 stability, but not stability of 7SK snRNAs, other miRNAs or tRNAs. U6 stabilization is required for efficient pre-mRNA splicing. Essential for organismal and germline development. This Drosophila melanogaster (Fruit fly) protein is U6 snRNA methylphosphate capping enzyme Amus.